A 468-amino-acid chain; its full sequence is FAD-linked oxidoreductase azaG (468 aa).

The N-terminal stretch at 1-16 (MQLSGILSWLLSWLWA) is a signal peptide. Asn44 is a glycosylation site (N-linked (GlcNAc...) asparagine). The region spanning 54-228 (TVHGAPHYLG…TSATYRTHQA (175 aa)) is the FAD-binding PCMH-type domain. N-linked (GlcNAc...) asparagine glycosylation is found at Asn272, Asn348, and Asn464.

The protein belongs to the oxygen-dependent FAD-linked oxidoreductase family. Requires FAD as cofactor.

Its pathway is secondary metabolite biosynthesis. In terms of biological role, FAD-linked oxidoreductase; part of the gene cluster that mediates the biosynthesis of azaphilones, a class of fungal metabolites characterized by a highly oxygenated pyrano-quinone bicyclic core and exhibiting a broad range of bioactivities. In the first step, the non-reducing polyketide synthase azaA forms the hexaketide precursor from successive condensations of five malonyl-CoA units, presumably with a simple acetyl-CoA starter unit. The reactive polyketide chain then undergoes a PT-mediated C2-C7 cyclization to afford the aromatic ring and is eventually released as an aldehyde through the R-domain. The putative ketoreductase azaE is proposed to catalyze the reduction of the terminal ketone resulting in the early culture product FK17-P2a. The monooxygenase azaH was demonstrated to be the only enzyme required to convert FK17-P2a to azanigerone E. AzaH first hydroxylates the benzaldehyde intermediate FK17-P2a at C4, which triggers the formation of the pyran-ring to afford azanigerone E. In parallel, the 2,4-dimethylhexanoyl chain is synthesized by the HR-PKS azaB and is proposed to be transferred to the C4-hydroxyl of azanigerone E by the acyltransferase azaD directly from the ACP domain of azaB. Alternatively, the 2,4-dimethyl-hexanoyl chain may be offloaded from the HR-PKS as a carboxylic acid and converted to an acyl-CoA by azaF. The resulting acyl-CoA molecule could then be taken up as a substrate by AzaD to form azanigerone B. To yield the carboxylic acid substituent in azanigerone A, the hydroxypropyl side chain of azanigerone B would need to undergo a C-C oxidative cleavage catalyzed by cytochrome P450 AzaI. AzaI is proposed to act on a vicinal diol that leads to a C-C bond scission either through an alkoxyradical intermediate or a peroxy complex. In the biosynthesis of azanigerone A, azanigerone B first undergoes hydroxylation at C10, possibly catalyzed by one of the two FAD-dependent monooxygenases encoded in the cluster, azaG or azaL, resulting in the vicinal diol azanigerone C. Oxidative cleavage of azanigerone C by azaI would yield the corresponding aldehyde derivative of azanigerone A. Finally, the dehydrogenase azaJ is proposed to convert the aldehyde functional group into the carboxylic acid, completing the conversion from azanigerone B to azanigerone A. Alternatively, the oxidation of aldehyde to carboxylic acid may be catalyzed by the same P450 enzyme azaI via consecutive oxidation or by endogenous alcohol dehydrogenase. The protein is FAD-linked oxidoreductase azaG of Aspergillus niger (strain ATCC 1015 / CBS 113.46 / FGSC A1144 / LSHB Ac4 / NCTC 3858a / NRRL 328 / USDA 3528.7).